Reading from the N-terminus, the 231-residue chain is MNPPKAILTDIEGTTTPIAFVHRVLFPYAKANMAGFLAAYSDDEAVAAILAEVEAQYPGRPALETLLGWMDEDAKITPLKALQGLIWREGYRNGALQAQVHPDAAQSLRAWHEAGLNLFVYSSGSVEAQQLLFSYSDQGDLSLLFGGFFDTRIGGKREADSYRHIIANTGMQPQSMLFLSDIEEELDAALDAGLRTCQLVRAGDNGGPPTLRHPHAPDFIAVAHLFGLPHP.

The protein belongs to the HAD-like hydrolase superfamily. MasA/MtnC family. As to quaternary structure, monomer. Mg(2+) is required as a cofactor.

The catalysed reaction is 5-methylsulfanyl-2,3-dioxopentyl phosphate + H2O = 1,2-dihydroxy-5-(methylsulfanyl)pent-1-en-3-one + phosphate. The protein operates within amino-acid biosynthesis; L-methionine biosynthesis via salvage pathway; L-methionine from S-methyl-5-thio-alpha-D-ribose 1-phosphate: step 3/6. Its pathway is amino-acid biosynthesis; L-methionine biosynthesis via salvage pathway; L-methionine from S-methyl-5-thio-alpha-D-ribose 1-phosphate: step 4/6. Its function is as follows. Bifunctional enzyme that catalyzes the enolization of 2,3-diketo-5-methylthiopentyl-1-phosphate (DK-MTP-1-P) into the intermediate 2-hydroxy-3-keto-5-methylthiopentenyl-1-phosphate (HK-MTPenyl-1-P), which is then dephosphorylated to form the acireductone 1,2-dihydroxy-3-keto-5-methylthiopentene (DHK-MTPene). The polypeptide is Enolase-phosphatase E1 (Granulibacter bethesdensis (strain ATCC BAA-1260 / CGDNIH1)).